The following is a 205-amino-acid chain: Large ribosomal subunit protein uL4 (205 aa).

The disordered stretch occupies residues 43–78 (ARAGTKAQKTRSEVAGGGKKPWRQKGTGNARAGTIR).

The protein belongs to the universal ribosomal protein uL4 family. As to quaternary structure, part of the 50S ribosomal subunit.

Functionally, one of the primary rRNA binding proteins, this protein initially binds near the 5'-end of the 23S rRNA. It is important during the early stages of 50S assembly. It makes multiple contacts with different domains of the 23S rRNA in the assembled 50S subunit and ribosome. Its function is as follows. Forms part of the polypeptide exit tunnel. The chain is Large ribosomal subunit protein uL4 from Halorhodospira halophila (strain DSM 244 / SL1) (Ectothiorhodospira halophila (strain DSM 244 / SL1)).